A 443-amino-acid polypeptide reads, in one-letter code: Proline--tRNA ligase (443 aa).

This sequence belongs to the class-II aminoacyl-tRNA synthetase family. ProS type 2 subfamily. As to quaternary structure, homodimer.

Its subcellular location is the cytoplasm. The catalysed reaction is tRNA(Pro) + L-proline + ATP = L-prolyl-tRNA(Pro) + AMP + diphosphate. Catalyzes the attachment of proline to tRNA(Pro) in a two-step reaction: proline is first activated by ATP to form Pro-AMP and then transferred to the acceptor end of tRNA(Pro). The polypeptide is Proline--tRNA ligase (Caulobacter vibrioides (strain ATCC 19089 / CIP 103742 / CB 15) (Caulobacter crescentus)).